We begin with the raw amino-acid sequence, 1538 residues long: CLIP-associating protein 1 (1538 aa).

HEAT repeat units follow at residues 87–124 and 163–200; these read AQIG…QAAN and LTLS…HVGE. The interval 235–292 is disordered; that stretch reads SANDKNFDDEDSVDGNRPSSASSTSSKAPPSSRRNVGMGTTRRLGSSTLGSKSSAAKE. Phosphoserine is present on S246. Residues 251–268 are compositionally biased toward low complexity; it reads RPSSASSTSSKAPPSSRR. HEAT repeat units follow at residues 405–440 and 441–477; these read HGAE…IRHT and HIPR…EWQT. The segment at 543-783 is disordered; sequence SDSIVSLPQS…DRFGLGQPGR (241 aa). Phosphoserine is present on residues S545, S548, S558, S559, and S568. The span at 548-567 shows a compositional bias: low complexity; the sequence is SLPQSDRSSSSSQESLNRPL. The segment covering 574–594 has biased composition (low complexity); it reads TGSTTSRASTVSTKSVSTTGS. The residue at position 600 (S600) is a Phosphoserine. Over residues 606 to 628 the composition is skewed to low complexity; sequence AAASAKSKVSSSSGTTPFSSAAA. Residues S636, S646, S647, and S649 each carry the phosphoserine modification. Positions 645 to 658 are enriched in polar residues; it reads QSSGSATNVASTPD. T656 carries the phosphothreonine modification. The tract at residues 662–785 is interaction with microtubules, MAPRE1 and MAPRE3; the sequence is RSRAKVVSQS…FGLGQPGRIP (124 aa). Low complexity predominate over residues 673-692; that stretch reads RSRSANPAGAGSRSSSPGKL. 4 positions are modified to phosphoserine: S684, S688, S695, and S705. A compositionally biased stretch (gly residues) spans 693-705; it reads LGSGYGGLTGGSS. T711 is subject to Phosphothreonine. S714 carries the post-translational modification Phosphoserine. Polar residues predominate over residues 724-733; sequence QGCSRETSPN. Phosphoserine occurs at positions 787, 797, and 823. The stretch at 974–1011 is one HEAT 5 repeat; sequence QQFNILMRFIVDQTQTPNLKVKVAILKYIESLARQMDP. Disordered stretches follow at residues 1080–1120 and 1136–1156; these read HLKN…CSHG and AKHP…SHKA. Polar residues predominate over residues 1082-1097; the sequence is KNSSNTSVGSPSNTIG. S1091 is modified (phosphoserine). Phosphothreonine occurs at positions 1095 and 1099. Positions 1106-1115 are enriched in low complexity; sequence SRTSPLTSPT. S1113 is modified (phosphoserine). S1196 and S1223 each carry phosphoserine. Positions 1215 to 1238 are disordered; sequence VSRDGGAASPATEGRGGSEVEGGR. Residues 1254 to 1538 are interaction with CLIP2; sequence RAFPGPRARD…SSSSDVSTHS (285 aa). The tract at residues 1254-1538 is interaction with PHLDB2 and RSN; sequence RAFPGPRARD…SSSSDVSTHS (285 aa). The localization to kinetochores stretch occupies residues 1256–1538; that stretch reads FPGPRARDYN…SSSSDVSTHS (283 aa). Residues 1299–1330 are a coiled coil; sequence DHSDLVADLLKELSNHNERVEERKGALLELLK. HEAT repeat units follow at residues 1342 to 1379 and 1460 to 1497; these read EHFK…NQPA and QLLV…VIGE.

This sequence belongs to the CLASP family. As to quaternary structure, interacts with CLIP2, ERC1, MAPRE1, MAPRE3, microtubules, PHLDB2 and RSN. The interaction with ERC1 may be mediated by PHLDB2. Interacts with GCC2; recruits CLASP1 to Golgi membranes. Interacts with MACF1. Interacts with mtcl2 and MTCL1.

The protein resides in the cytoplasm. Its subcellular location is the cytoskeleton. The protein localises to the microtubule organizing center. It localises to the centrosome. It is found in the chromosome. The protein resides in the centromere. Its subcellular location is the kinetochore. The protein localises to the spindle. It localises to the golgi apparatus. It is found in the trans-Golgi network. Microtubule plus-end tracking protein that promotes the stabilization of dynamic microtubules. Involved in the nucleation of noncentrosomal microtubules originating from the trans-Golgi network (TGN). Required for the polarization of the cytoplasmic microtubule arrays in migrating cells towards the leading edge of the cell. May act at the cell cortex to enhance the frequency of rescue of depolymerizing microtubules by attaching their plus-ends to cortical platforms composed of ERC1 and PHLDB2. This cortical microtubule stabilizing activity is regulated at least in part by phosphatidylinositol 3-kinase signaling. Also performs a similar stabilizing function at the kinetochore which is essential for the bipolar alignment of chromosomes on the mitotic spindle. The polypeptide is CLIP-associating protein 1 (CLASP1) (Homo sapiens (Human)).